A 76-amino-acid chain; its full sequence is Acyl carrier protein (76 aa).

The 76-residue stretch at 1–76 folds into the Carrier domain; it reads MSVEEKVKKI…DAIDYIAGKQ (76 aa). Ser-36 carries the post-translational modification O-(pantetheine 4'-phosphoryl)serine.

This sequence belongs to the acyl carrier protein (ACP) family. 4'-phosphopantetheine is transferred from CoA to a specific serine of apo-ACP by AcpS. This modification is essential for activity because fatty acids are bound in thioester linkage to the sulfhydryl of the prosthetic group.

The protein localises to the cytoplasm. It functions in the pathway lipid metabolism; fatty acid biosynthesis. Functionally, carrier of the growing fatty acid chain in fatty acid biosynthesis. This is Acyl carrier protein from Oleidesulfovibrio alaskensis (strain ATCC BAA-1058 / DSM 17464 / G20) (Desulfovibrio alaskensis).